Consider the following 335-residue polypeptide: 4-hydroxy-3-methylbut-2-enyl diphosphate reductase (335 aa).

Cysteine 14 contributes to the [4Fe-4S] cluster binding site. (2E)-4-hydroxy-3-methylbut-2-enyl diphosphate-binding residues include histidine 43 and histidine 81. Dimethylallyl diphosphate-binding residues include histidine 43 and histidine 81. 2 residues coordinate isopentenyl diphosphate: histidine 43 and histidine 81. Cysteine 103 contributes to the [4Fe-4S] cluster binding site. (2E)-4-hydroxy-3-methylbut-2-enyl diphosphate is bound at residue histidine 132. Histidine 132 lines the dimethylallyl diphosphate pocket. Histidine 132 provides a ligand contact to isopentenyl diphosphate. The active-site Proton donor is the glutamate 134. Residue threonine 179 coordinates (2E)-4-hydroxy-3-methylbut-2-enyl diphosphate. Cysteine 209 is a [4Fe-4S] cluster binding site. Residues serine 237, serine 238, asparagine 239, and serine 285 each coordinate (2E)-4-hydroxy-3-methylbut-2-enyl diphosphate. Positions 237, 238, 239, and 285 each coordinate dimethylallyl diphosphate. Isopentenyl diphosphate-binding residues include serine 237, serine 238, asparagine 239, and serine 285.

Belongs to the IspH family. It depends on [4Fe-4S] cluster as a cofactor.

The catalysed reaction is isopentenyl diphosphate + 2 oxidized [2Fe-2S]-[ferredoxin] + H2O = (2E)-4-hydroxy-3-methylbut-2-enyl diphosphate + 2 reduced [2Fe-2S]-[ferredoxin] + 2 H(+). It carries out the reaction dimethylallyl diphosphate + 2 oxidized [2Fe-2S]-[ferredoxin] + H2O = (2E)-4-hydroxy-3-methylbut-2-enyl diphosphate + 2 reduced [2Fe-2S]-[ferredoxin] + 2 H(+). It participates in isoprenoid biosynthesis; dimethylallyl diphosphate biosynthesis; dimethylallyl diphosphate from (2E)-4-hydroxy-3-methylbutenyl diphosphate: step 1/1. Its pathway is isoprenoid biosynthesis; isopentenyl diphosphate biosynthesis via DXP pathway; isopentenyl diphosphate from 1-deoxy-D-xylulose 5-phosphate: step 6/6. In terms of biological role, catalyzes the conversion of 1-hydroxy-2-methyl-2-(E)-butenyl 4-diphosphate (HMBPP) into a mixture of isopentenyl diphosphate (IPP) and dimethylallyl diphosphate (DMAPP). Acts in the terminal step of the DOXP/MEP pathway for isoprenoid precursor biosynthesis. The sequence is that of 4-hydroxy-3-methylbut-2-enyl diphosphate reductase from Deinococcus radiodurans (strain ATCC 13939 / DSM 20539 / JCM 16871 / CCUG 27074 / LMG 4051 / NBRC 15346 / NCIMB 9279 / VKM B-1422 / R1).